The sequence spans 531 residues: Cytochrome P450 monooxygenase ffsD (531 aa).

Residues 40 to 60 traverse the membrane as a helical segment; it reads VGALLGISLSVVLLLWVISVV. Cysteine 475 lines the heme pocket.

The protein belongs to the cytochrome P450 family. Requires heme as cofactor.

It localises to the membrane. Its pathway is mycotoxin biosynthesis. In terms of biological role, cytochrome P450 monooxygenase; part of the gene cluster that mediates the biosynthesis of the cytotoxic leucine-containing cytochalasans, including aspochalasin C, aspochalasin E, TMC-169, flavichalasine F, aspergillin PZ, aspochalasin M and flavichalasine G. The first step in the pathway is catalyzed by the hybrid PKS-NRPS ffsA that utilizes 8 units of malonyl-CoA to iteratively assemble the octaketide chain before addition of L-leucine by the C-terminal NRPS modules. Because ffsA lacks a designated enoylreductase (ER) domain, the required activity is provided the enoyl reductase fssC. The methyltransferase (MT) domain of ffsA catalyzes the alpha-methylation at C10 and C14 using S-adenosyl-L-methionine as the methyl-donating cosubstrate. Reduction by the hydrolyase ffsE, followed by dehydration and intra-molecular Diels-Alder cyclization by the Diels-Alderase ffsF then yield the required isoindolone-fused macrocycle. A number of oxidative steps catalyzed by the tailoring cytochrome P450 monooxygenase ffsD, the FAD-linked oxidoreductase ffsJ and the short-chain dehydrogenase/reductase ffsI, are further required to afford the final products. In Aspergillus flavipes, this protein is Cytochrome P450 monooxygenase ffsD.